The sequence spans 239 residues: Phosphoribosylaminoimidazole-succinocarboxamide synthase (239 aa).

Belongs to the SAICAR synthetase family.

The enzyme catalyses 5-amino-1-(5-phospho-D-ribosyl)imidazole-4-carboxylate + L-aspartate + ATP = (2S)-2-[5-amino-1-(5-phospho-beta-D-ribosyl)imidazole-4-carboxamido]succinate + ADP + phosphate + 2 H(+). Its pathway is purine metabolism; IMP biosynthesis via de novo pathway; 5-amino-1-(5-phospho-D-ribosyl)imidazole-4-carboxamide from 5-amino-1-(5-phospho-D-ribosyl)imidazole-4-carboxylate: step 1/2. This is Phosphoribosylaminoimidazole-succinocarboxamide synthase from Bacillus mycoides (strain KBAB4) (Bacillus weihenstephanensis).